Here is a 390-residue protein sequence, read N- to C-terminus: ATP-sensitive inward rectifier potassium channel 11 (390 aa).

The Cytoplasmic segment spans residues 1-65 (MLSRKGIIPE…LQDVFTTLVD (65 aa)). The ATP site is built by asparagine 48 and arginine 50. The chain crosses the membrane as a helical span at residues 66–92 (LKWPHTLLIFTMSFLCSWLLFAMAWWL). Residues 93–116 (IAFAHGDLAPSEGTAEPCVTSIHS) lie on the Extracellular side of the membrane. Cysteine 110 and cysteine 142 are joined by a disulfide. The discontinuously helical; Pore-forming intramembrane region spans 117 to 133 (FSSAFLFSIEVQVTIGF). K(+) contacts are provided by threonine 130 and phenylalanine 133. The Selectivity filter motif lies at 130-135 (TIGFGG). At 134–142 (GGRMVTEEC) the chain is on the extracellular side. A helical transmembrane segment spans residues 143-171 (PLAILILIVQNIVGLMINAIMLGCIFMKT). The Cytoplasmic segment spans residues 172–390 (AQAHRRAETL…KFSISPDSLS (219 aa)). Arginine 176 is an a 1,2-diacyl-sn-glycero-3-phospho-(1D-myo-inositol-4,5-bisphosphate) binding site. Tyrosine 330 contributes to the ATP binding site. Phosphothreonine; by MAPK1 is present on threonine 341. Serine 385 bears the Phosphoserine; by MAPK1 mark.

Belongs to the inward rectifier-type potassium channel (TC 1.A.2.1) family. KCNJ11 subfamily. In terms of assembly, homotetramer; the homotetramer binds four ATP molecules (one ATP per subunit). Forms an heterooctamer with ABCC8/SUR1; one KCNJ11 homotetramer interacts with four ABCC8/SUR1 molecules. Interacts with ABCC9/SUR2. Phosphorylation by MAPK1 results in changes in channel gating that destabilize the closed states and reduce the ATP sensitivity.

The protein resides in the membrane. The catalysed reaction is K(+)(in) = K(+)(out). With respect to regulation, KATP channels are regulated by cytoplasmic ATP/ADP ratios; ATP inhibits the channel by closing the pore, while ADP activates the channel. Activated by phosphatidylinositol 4,5-biphosphate (PtdIns(4,5)P2). Inward rectifier potassium channel that forms the pore of ATP-sensitive potassium channels (KATP), regulating potassium permeability as a function of cytoplasmic ATP and ADP concentrations in many different cells. Inward rectifier potassium channels are characterized by a greater tendency to allow potassium to flow into the cell rather than out of it. Their voltage dependence is regulated by the concentration of extracellular potassium; as external potassium is raised, the voltage range of the channel opening shifts to more positive voltages. The inward rectification is mainly due to the blockage of outward current by internal magnesium. Can be blocked by extracellular barium. In pancreatic cells, it forms KATP channels with ABCC8/SUR1. Can form cardiac and smooth muscle-type KATP channels with ABCC9. This chain is ATP-sensitive inward rectifier potassium channel 11 (KCNJ11), found in Homo sapiens (Human).